We begin with the raw amino-acid sequence, 75 residues long: Putative membrane protein insertion efficiency factor (75 aa).

The protein belongs to the UPF0161 family.

It is found in the cell membrane. Its function is as follows. Could be involved in insertion of integral membrane proteins into the membrane. This Halalkalibacterium halodurans (strain ATCC BAA-125 / DSM 18197 / FERM 7344 / JCM 9153 / C-125) (Bacillus halodurans) protein is Putative membrane protein insertion efficiency factor.